The primary structure comprises 163 residues: UPF0478 protein SAB1599c (163 aa).

The chain crosses the membrane as a helical span at residues 7 to 27 (IAGIIAAIAFLILCIGIVAVL).

Belongs to the UPF0478 family.

It localises to the cell membrane. The protein is UPF0478 protein SAB1599c of Staphylococcus aureus (strain bovine RF122 / ET3-1).